Here is a 242-residue protein sequence, read N- to C-terminus: UPF0157 protein PA4798 (242 aa).

The tract at residues alanine 215 to aspartate 242 is disordered.

The protein belongs to the UPF0157 (GrpB) family.

The protein is UPF0157 protein PA4798 of Pseudomonas aeruginosa (strain ATCC 15692 / DSM 22644 / CIP 104116 / JCM 14847 / LMG 12228 / 1C / PRS 101 / PAO1).